Consider the following 340-residue polypeptide: 4-hydroxythreonine-4-phosphate dehydrogenase (340 aa).

T135 provides a ligand contact to substrate. H170, H215, and H276 together coordinate a divalent metal cation. Substrate is bound by residues K284, N293, and R302.

The protein belongs to the PdxA family. As to quaternary structure, homodimer. A divalent metal cation serves as cofactor.

It localises to the cytoplasm. It carries out the reaction 4-(phosphooxy)-L-threonine + NAD(+) = 3-amino-2-oxopropyl phosphate + CO2 + NADH. Its pathway is cofactor biosynthesis; pyridoxine 5'-phosphate biosynthesis; pyridoxine 5'-phosphate from D-erythrose 4-phosphate: step 4/5. Its function is as follows. Catalyzes the NAD(P)-dependent oxidation of 4-(phosphooxy)-L-threonine (HTP) into 2-amino-3-oxo-4-(phosphooxy)butyric acid which spontaneously decarboxylates to form 3-amino-2-oxopropyl phosphate (AHAP). In Synechococcus sp. (strain JA-2-3B'a(2-13)) (Cyanobacteria bacterium Yellowstone B-Prime), this protein is 4-hydroxythreonine-4-phosphate dehydrogenase.